We begin with the raw amino-acid sequence, 263 residues long: Palmitoyltransferase ZDHHC22 (263 aa).

Over 1 to 9 (MLALRLLNV) the chain is Cytoplasmic. The chain crosses the membrane as a helical span at residues 10–30 (VAPAYFLCISLVTFVLQLFLF). Over 31–47 (LPSMREDPTATPLFSPA) the chain is Lumenal. Residues 48–68 (VLHGALFLFLSANALGNYILV) traverse the membrane as a helical segment. At 69–125 (VQNSPDDLGACQGTSSQRPQRPPPSTHFCRVCARVTLRHDHHCFFTGNCIGSRNMRN) the chain is on the cytoplasmic side. Residues 91-131 (PPSTHFCRVCARVTLRHDHHCFFTGNCIGSRNMRNFILFCL) form the DHHC domain. Catalysis depends on C111, which acts as the S-palmitoyl cysteine intermediate. The next 2 helical transmembrane spans lie at 126-146 (FILF…AGVA) and 147-167 (YISA…TLLP). Topologically, residues 168 to 182 (TSISQFFSGAVLGSD) are cytoplasmic. A helical transmembrane segment spans residues 183–203 (MFVILMLYLWFAVGLACAGFC). Topologically, residues 204–263 (CHQLLLILRGQTRYQVRKGVAVRARPWRKNLQEVFGKRWLLGLLVPMFNVGTESSKQQDK) are lumenal.

The protein belongs to the DHHC palmitoyltransferase family. As to quaternary structure, interacts with CNN3.

The protein resides in the endoplasmic reticulum membrane. It is found in the golgi apparatus membrane. The catalysed reaction is L-cysteinyl-[protein] + hexadecanoyl-CoA = S-hexadecanoyl-L-cysteinyl-[protein] + CoA. Palmitoyltransferase that could catalyze the addition of palmitate onto various protein substrates and be involved in a variety of cellular processes. Catalyzes the palmitoylation of KCNMA1, regulating localization of KCNMA1 to the plasma membrane. Might also mediate palmitoylation of CNN3. The polypeptide is Palmitoyltransferase ZDHHC22 (Rattus norvegicus (Rat)).